Reading from the N-terminus, the 445-residue chain is Maltoporin (445 aa).

Positions 1 to 24 are cleaved as a signal peptide; the sequence is MITLRKLPLAVAVAAGVMSAQAMA.

This sequence belongs to the porin LamB (TC 1.B.3) family. Homotrimer formed of three 18-stranded antiparallel beta-barrels, containing three independent channels.

Its subcellular location is the cell outer membrane. It catalyses the reaction beta-maltose(in) = beta-maltose(out). Its function is as follows. Involved in the transport of maltose and maltodextrins. This is Maltoporin from Shigella flexneri.